We begin with the raw amino-acid sequence, 230 residues long: Large ribosomal subunit protein uL1 (230 aa).

It belongs to the universal ribosomal protein uL1 family. As to quaternary structure, part of the 50S ribosomal subunit.

Functionally, binds directly to 23S rRNA. The L1 stalk is quite mobile in the ribosome, and is involved in E site tRNA release. Its function is as follows. Protein L1 is also a translational repressor protein, it controls the translation of the L11 operon by binding to its mRNA. The protein is Large ribosomal subunit protein uL1 of Bacillus mycoides (strain KBAB4) (Bacillus weihenstephanensis).